The following is a 304-amino-acid chain: Acetaldehyde dehydrogenase 4 (304 aa).

The active-site Acyl-thioester intermediate is Cys-131. Residues 162-170 (SAGPGTRKN) and Asn-273 each bind NAD(+).

It belongs to the acetaldehyde dehydrogenase family. Heterotetramer composed of two BphI (aldolase) and two BphJ (dehydrogenase).

The enzyme catalyses acetaldehyde + NAD(+) + CoA = acetyl-CoA + NADH + H(+). It catalyses the reaction propanal + NAD(+) + CoA = propanoyl-CoA + NADH + H(+). It functions in the pathway xenobiotic degradation; polychlorinated biphenyl degradation. Its activity is regulated as follows. Bound pyruvate or other intermediates in the aldol addition reaction catalyzed by BphI allosterically activates BphJ reductive deacylation activity. In terms of biological role, catalyzes the conversion of acetaldehyde or propanal to acetyl-CoA or propanoyl-CoA, respectively, using NAD(+) and coenzyme A. Displays broad specificity since it can utilize aliphatic aldehydes from two to five carbons in length as substrates; the aldehyde substrates can be directly channeled from the aldolase BphI to the dehydrogenase BphJ. Is the final enzyme in the meta-cleavage pathway for the degradation of polychlorinated biphenyls (PCBs). Is also able to utilize NADP(+) instead of NAD(+). Is not active with succinic semialdehyde or picolinaldehyde as substrates. Can also catalyze the reverse reaction, i.e. the reductive deacylation of acetyl-CoA to acetaldehyde, which is then channeled to the BphI active site. The BphI-BphJ enzyme complex exhibits unique bidirectionality in substrate channeling and allosteric activation. This chain is Acetaldehyde dehydrogenase 4 (bphJ), found in Paraburkholderia xenovorans (strain LB400).